A 479-amino-acid polypeptide reads, in one-letter code: Dihydrolipoyl dehydrogenase (479 aa).

Residues 41–50 (EKRGALGGTC), Lys59, Ala124, and 153–155 (TGS) each bind FAD. The cysteines at positions 50 and 55 are disulfide-linked. NAD(+)-binding positions include 190 to 197 (GGGVIGLE), Glu213, Ile247, and Gly284. FAD contacts are provided by residues Asp325 and 332–335 (MLAH). The active-site Proton acceptor is His458.

Belongs to the class-I pyridine nucleotide-disulfide oxidoreductase family. Homodimer. It depends on FAD as a cofactor.

The enzyme catalyses N(6)-[(R)-dihydrolipoyl]-L-lysyl-[protein] + NAD(+) = N(6)-[(R)-lipoyl]-L-lysyl-[protein] + NADH + H(+). In Trypanosoma brucei brucei, this protein is Dihydrolipoyl dehydrogenase.